Here is a 200-residue protein sequence, read N- to C-terminus: Glycosyl hydrolase family 19 domain-containing protein HI_1415 (200 aa).

The protein belongs to the glycosyl hydrolase 19 family.

The sequence is that of Glycosyl hydrolase family 19 domain-containing protein HI_1415 from Haemophilus influenzae (strain ATCC 51907 / DSM 11121 / KW20 / Rd).